A 499-amino-acid chain; its full sequence is Protein flp (499 aa).

Transmembrane regions (helical) follow at residues 6 to 26 (LYFL…IYIT), 389 to 409 (FNIV…FSAY), 433 to 453 (LTLC…YLIL), and 471 to 491 (LTLT…LLIL).

Its subcellular location is the cell membrane. Its precise function is unknown. Has no penicillin-binding activity and is not involved in methicillin resistance. This Staphylococcus aureus (strain MRSA252) protein is Protein flp (flp).